Consider the following 625-residue polypeptide: 1-deoxy-D-xylulose-5-phosphate synthase (625 aa).

Residues H80 and 121–123 (GHS) each bind thiamine diphosphate. Residue D152 participates in Mg(2+) binding. Residues 153–154 (GA), N181, Y290, and E371 each bind thiamine diphosphate. N181 lines the Mg(2+) pocket.

Belongs to the transketolase family. DXPS subfamily. As to quaternary structure, homodimer. It depends on Mg(2+) as a cofactor. Thiamine diphosphate serves as cofactor.

The enzyme catalyses D-glyceraldehyde 3-phosphate + pyruvate + H(+) = 1-deoxy-D-xylulose 5-phosphate + CO2. It participates in metabolic intermediate biosynthesis; 1-deoxy-D-xylulose 5-phosphate biosynthesis; 1-deoxy-D-xylulose 5-phosphate from D-glyceraldehyde 3-phosphate and pyruvate: step 1/1. Functionally, catalyzes the acyloin condensation reaction between C atoms 2 and 3 of pyruvate and glyceraldehyde 3-phosphate to yield 1-deoxy-D-xylulose-5-phosphate (DXP). The sequence is that of 1-deoxy-D-xylulose-5-phosphate synthase from Haemophilus influenzae (strain 86-028NP).